The sequence spans 92 residues: N(2)-fixation sustaining protein CowN (92 aa).

This sequence belongs to the CowN family.

Functionally, is required to sustain N(2)-dependent growth in the presence of low levels of carbon monoxide (CO). Probably acts by protecting the N(2) fixation ability of the nitrogenase complex, which is inactivated in the presence of CO. In Rhodopseudomonas palustris (strain HaA2), this protein is N(2)-fixation sustaining protein CowN.